The sequence spans 522 residues: Paraspeckle component 1 (522 aa).

At M1 the chain carries N-acetylmethionine. RRM domains lie at 81-153 (CRLF…FATH) and 155-236 (AALT…PMEQ). Residues 124 to 357 (ESRTLAEIAK…QLRHEEEHRR (234 aa)) are sufficient for paraspeckles localization. The tract at residues 230 to 357 (IVEPMEQFDD…QLRHEEEHRR (128 aa)) is sufficient for perinucleolar caps localization and interaction with NONO. A coiled-coil region spans residues 282–376 (DEMEKQQREQ…EQEELRRQQE (95 aa)). 3 positions are modified to phosphoserine: S408, S472, and S476. The segment at 459-522 (GAVHNDRFPQ…FEGPNKRRRY (64 aa)) is disordered. The span at 471 to 489 (PSQMGSPMGNRTGSETPQA) shows a compositional bias: polar residues. Positions 497-513 (VSGGPGGFGRGSQGGNF) are enriched in gly residues. R506 bears the Omega-N-methylarginine mark. The residue at position 508 (S508) is a Phosphoserine.

This sequence belongs to the PSPC family. In terms of assembly, forms heterodimers with NONO; this involves formation of a coiled coil domain by helices from both proteins. Found in a RNP complex with CAT2 transcribed nuclear RNA (CTN-RNA). Interaction with NONO is required for its targeting to paraspeckles and perinucleolar caps. Interacts with SFPQ. Part of the HDP-RNP complex composed of at least HEXIM1, PRKDC, XRCC5, XRCC6, paraspeckle proteins (SFPQ, NONO, PSPC1, RBM14, and MATR3) and NEAT1 RNA. Interacts with ALKBH5 (when acetylated); interaction with acetylated ALKBH5 facilitates recognition of N(6)-methyladenosine (m6A) RNAs.

The protein resides in the nucleus speckle. It localises to the nucleus. Its subcellular location is the nucleolus. It is found in the nucleus matrix. The protein localises to the cytoplasm. Its function is as follows. RNA-binding protein required for the formation of nuclear paraspeckles. Binds to poly(A), poly(G) and poly(U) RNA homopolymers. Regulates, cooperatively with NONO and SFPQ, androgen receptor-mediated gene transcription activity in Sertoli cell line. Regulates the circadian clock by repressing the transcriptional activator activity of the CLOCK-BMAL1 heterodimer. Plays a role in the regulation of DNA virus-mediated innate immune response by assembling into the HDP-RNP complex, a complex that serves as a platform for IRF3 phosphorylation and subsequent innate immune response activation through the cGAS-STING pathway. This chain is Paraspeckle component 1 (Pspc1), found in Rattus norvegicus (Rat).